The following is a 58-amino-acid chain: Large ribosomal subunit protein uL30 (58 aa).

This sequence belongs to the universal ribosomal protein uL30 family. In terms of assembly, part of the 50S ribosomal subunit.

The polypeptide is Large ribosomal subunit protein uL30 (Psychromonas ingrahamii (strain DSM 17664 / CCUG 51855 / 37)).